The sequence spans 149 residues: D-aminoacyl-tRNA deacylase (149 aa).

The short motif at 137-138 (GP) is the Gly-cisPro motif, important for rejection of L-amino acids element.

Belongs to the DTD family. Homodimer.

It is found in the cytoplasm. The enzyme catalyses glycyl-tRNA(Ala) + H2O = tRNA(Ala) + glycine + H(+). It catalyses the reaction a D-aminoacyl-tRNA + H2O = a tRNA + a D-alpha-amino acid + H(+). An aminoacyl-tRNA editing enzyme that deacylates mischarged D-aminoacyl-tRNAs. Also deacylates mischarged glycyl-tRNA(Ala), protecting cells against glycine mischarging by AlaRS. Acts via tRNA-based rather than protein-based catalysis; rejects L-amino acids rather than detecting D-amino acids in the active site. By recycling D-aminoacyl-tRNA to D-amino acids and free tRNA molecules, this enzyme counteracts the toxicity associated with the formation of D-aminoacyl-tRNA entities in vivo and helps enforce protein L-homochirality. The sequence is that of D-aminoacyl-tRNA deacylase from Clostridium botulinum (strain Alaska E43 / Type E3).